We begin with the raw amino-acid sequence, 106 residues long: Large ribosomal subunit protein P1 (106 aa).

Positions 69–106 (AAAAAPAEEAKEEAKEEEEEEEEVKEEEAIEGLGALFG) are disordered. A compositionally biased stretch (acidic residues) spans 83 to 98 (KEEEEEEEEVKEEEAI).

This sequence belongs to the eukaryotic ribosomal protein P1/P2 family. Part of the 50S ribosomal subunit. Homodimer, it forms part of the ribosomal stalk which helps the ribosome interact with GTP-bound translation factors. Forms a heptameric uL10/P0(P1)2(P1)2(P1)2 complex, where uL10/P0 forms an elongated spine to which the P1 dimers bind in a sequential fashion.

Functionally, forms part of the ribosomal stalk, playing a central role in the interaction of the ribosome with GTP-bound translation factors. The protein is Large ribosomal subunit protein P1 of Archaeoglobus fulgidus (strain ATCC 49558 / DSM 4304 / JCM 9628 / NBRC 100126 / VC-16).